The sequence spans 194 residues: Xanthine phosphoribosyltransferase (194 aa).

Positions 20 and 27 each coordinate xanthine. 128–132 (ANGQA) provides a ligand contact to 5-phospho-alpha-D-ribose 1-diphosphate. Lys-156 is a xanthine binding site.

It belongs to the purine/pyrimidine phosphoribosyltransferase family. Xpt subfamily. As to quaternary structure, homodimer.

It is found in the cytoplasm. The catalysed reaction is XMP + diphosphate = xanthine + 5-phospho-alpha-D-ribose 1-diphosphate. It participates in purine metabolism; XMP biosynthesis via salvage pathway; XMP from xanthine: step 1/1. Functionally, converts the preformed base xanthine, a product of nucleic acid breakdown, to xanthosine 5'-monophosphate (XMP), so it can be reused for RNA or DNA synthesis. The polypeptide is Xanthine phosphoribosyltransferase (Bacillus licheniformis (strain ATCC 14580 / DSM 13 / JCM 2505 / CCUG 7422 / NBRC 12200 / NCIMB 9375 / NCTC 10341 / NRRL NRS-1264 / Gibson 46)).